The chain runs to 156 residues: FAD synthase (156 aa).

ATP contacts are provided by residues 16–17, 21–24, D101, and Y129; these read TF and HPGH.

This sequence belongs to the archaeal FAD synthase family. In terms of assembly, homodimer. The cofactor is a divalent metal cation.

It carries out the reaction FMN + ATP + H(+) = FAD + diphosphate. It participates in cofactor biosynthesis; FAD biosynthesis; FAD from FMN: step 1/1. Its function is as follows. Catalyzes the transfer of the AMP portion of ATP to flavin mononucleotide (FMN) to produce flavin adenine dinucleotide (FAD) coenzyme. This Methanococcus aeolicus (strain ATCC BAA-1280 / DSM 17508 / OCM 812 / Nankai-3) protein is FAD synthase.